Consider the following 879-residue polypeptide: Valine--tRNA ligase (879 aa).

A 'HIGH' region motif is present at residues 43-53; that stretch reads PNVTGVLHMGH. The 'KMSKS' region motif lies at 534–538; that stretch reads KMSKS. Residue Lys-537 participates in ATP binding. Residues 807–878 are a coiled coil; it reads LGNMIDVEAE…LKESIAALKK (72 aa).

Belongs to the class-I aminoacyl-tRNA synthetase family. ValS type 1 subfamily. As to quaternary structure, monomer.

It localises to the cytoplasm. It catalyses the reaction tRNA(Val) + L-valine + ATP = L-valyl-tRNA(Val) + AMP + diphosphate. Catalyzes the attachment of valine to tRNA(Val). As ValRS can inadvertently accommodate and process structurally similar amino acids such as threonine, to avoid such errors, it has a 'posttransfer' editing activity that hydrolyzes mischarged Thr-tRNA(Val) in a tRNA-dependent manner. The chain is Valine--tRNA ligase from Bacteroides thetaiotaomicron (strain ATCC 29148 / DSM 2079 / JCM 5827 / CCUG 10774 / NCTC 10582 / VPI-5482 / E50).